A 239-amino-acid chain; its full sequence is tRNA (guanine-N(7)-)-methyltransferase (239 aa).

S-adenosyl-L-methionine-binding residues include glutamate 69, glutamate 94, aspartate 121, and aspartate 144. Aspartate 144 is an active-site residue. Lysine 148 lines the substrate pocket. The interaction with RNA stretch occupies residues arginine 150–arginine 155. Substrate is bound by residues aspartate 180 and threonine 217–glutamate 220.

It belongs to the class I-like SAM-binding methyltransferase superfamily. TrmB family. In terms of assembly, monomer.

It carries out the reaction guanosine(46) in tRNA + S-adenosyl-L-methionine = N(7)-methylguanosine(46) in tRNA + S-adenosyl-L-homocysteine. Its pathway is tRNA modification; N(7)-methylguanine-tRNA biosynthesis. Functionally, catalyzes the formation of N(7)-methylguanine at position 46 (m7G46) in tRNA. The protein is tRNA (guanine-N(7)-)-methyltransferase of Klebsiella pneumoniae subsp. pneumoniae (strain ATCC 700721 / MGH 78578).